A 461-amino-acid chain; its full sequence is Serine/threonine-protein kinase 4 homolog A (461 aa).

One can recognise a Protein kinase domain in the interval F20–I273. Residues L26 to V34 and K49 each bind ATP. D139 serves as the catalytic Proton acceptor. Phosphothreonine; by autocatalysis is present on T173. 2 disordered regions span residues G303–D349 and N369–K388. Residues R307–D322 show a composition bias toward acidic residues. Residues S411–K458 form the SARAH domain.

Belongs to the protein kinase superfamily. STE Ser/Thr protein kinase family. STE20 subfamily. The cofactor is Mn(2+). Undergoes autophosphorylation in the catalytic domain.

The protein localises to the cytoplasm. It is found in the cytosol. It catalyses the reaction L-seryl-[protein] + ATP = O-phospho-L-seryl-[protein] + ADP + H(+). The enzyme catalyses L-threonyl-[protein] + ATP = O-phospho-L-threonyl-[protein] + ADP + H(+). Functionally, regulates both cAMP signaling during early development and the stress response. Functions as an activator of adenylylcyclase. In Dictyostelium discoideum (Social amoeba), this protein is Serine/threonine-protein kinase 4 homolog A (krsA).